The following is a 290-amino-acid chain: Pirin (290 aa).

Residues His56, His58, His101, and Glu103 each contribute to the Fe cation site.

The protein belongs to the pirin family. May interact with NF1/CTF1. Interacts with BCL3. Identified in a complex comprised of PIR, BLC3, NFKB1 and target DNA. Fe cation is required as a cofactor. In terms of tissue distribution, highly expressed in a subset of melanomas. Detected at very low levels in most tissues (at protein level). Expressed in all tissues, with highest level of expression in heart and liver.

It localises to the nucleus. Its subcellular location is the cytoplasm. The enzyme catalyses quercetin + O2 = 2-(3,4-dihydroxybenzoyloxy)-4,6-dihydroxybenzoate + CO. The protein operates within flavonoid metabolism; quercetin degradation. Its activity is regulated as follows. Inhibited by kojic acid, sodium diethyldithiocarbamate and 1,10-phenanthroline monohydrochloride. Its function is as follows. Transcriptional coregulator of NF-kappa-B which facilitates binding of NF-kappa-B proteins to target kappa-B genes in a redox-state-dependent manner. May be required for efficient terminal myeloid maturation of hematopoietic cells. Has quercetin 2,3-dioxygenase activity (in vitro). In Homo sapiens (Human), this protein is Pirin (PIR).